Reading from the N-terminus, the 216-residue chain is uncharacterized protein (216 aa).

The helical transmembrane segment at 5-22 (LGLVFGSVILIYLISLFL) threads the bilayer.

It localises to the membrane. This is an uncharacterized protein from Aquifex aeolicus (strain VF5).